The chain runs to 214 residues: Cytochrome c biogenesis ATP-binding export protein CcmA (214 aa).

The ABC transporter domain occupies 12–214 (LAAHALAFSR…TRMLTLEAAA (203 aa)). Position 44–51 (44–51 (GDNGAGKT)) interacts with ATP.

Belongs to the ABC transporter superfamily. CcmA exporter (TC 3.A.1.107) family. In terms of assembly, the complex is composed of two ATP-binding proteins (CcmA) and two transmembrane proteins (CcmB).

The protein localises to the cell inner membrane. The enzyme catalyses heme b(in) + ATP + H2O = heme b(out) + ADP + phosphate + H(+). Its function is as follows. Part of the ABC transporter complex CcmAB involved in the biogenesis of c-type cytochromes; once thought to export heme, this seems not to be the case, but its exact role is uncertain. Responsible for energy coupling to the transport system. The protein is Cytochrome c biogenesis ATP-binding export protein CcmA of Xanthomonas oryzae pv. oryzae (strain MAFF 311018).